A 354-amino-acid chain; its full sequence is Rhodopsin (354 aa).

The Extracellular segment spans residues 1-36; the sequence is MNGTEGENFYVPMSNKTGVVRSPFDYPQYYLGEPWM. N-linked (GlcNAc...) asparagine glycosylation is found at N2 and N15. A helical membrane pass occupies residues 37–61; it reads FSALAAYMFFLILTGLPVNFLTLFV. At 62-73 the chain is on the cytoplasmic side; it reads TIQHKKLRQPLN. A helical membrane pass occupies residues 74-96; sequence YILLNLAVSDLFMVFGGFTTTII. The Extracellular segment spans residues 97–110; sequence TSMNGYFIFGPAGC. The cysteines at positions 110 and 187 are disulfide-linked. A helical membrane pass occupies residues 111 to 133; it reads NFEGFFATLGGEVGLWCLVVLAI. A 'Ionic lock' involved in activated form stabilization motif is present at residues 134–136; sequence ERY. Topologically, residues 134–152 are cytoplasmic; it reads ERYMVVCKPMANFRFGSQH. Residues 153–173 traverse the membrane as a helical segment; it reads AIIGVVFTWIMALSCAGPPLV. Residues 174–202 are Extracellular-facing; sequence GWSRYIPEGLQCSCGVDYYTMKPEVNNES. The helical transmembrane segment at 203–224 threads the bilayer; it reads FVIYMFVVHFTIPLIVIFFCYG. The Cytoplasmic segment spans residues 225 to 252; the sequence is RLVCTVKEAAAQQQESESTQRAEREVTR. The helical transmembrane segment at 253–274 threads the bilayer; sequence MVIIMVVAFLICWVPYASVAFY. Residues 275–286 lie on the Extracellular side of the membrane; it reads IFINQGCDFTPF. A helical transmembrane segment spans residues 287-308; sequence FMTVPAFFAKSSAVYNPLIYIL. K296 is modified (N6-(retinylidene)lysine). The Cytoplasmic portion of the chain corresponds to 309-354; that stretch reads MNKQFRNCMITTICLGKNPFEEEESTSASASKTEASSVSSSQVAPA. C322 carries the S-palmitoyl cysteine lipid modification. Residues 333–354 are disordered; it reads STSASASKTEASSVSSSQVAPA. Low complexity predominate over residues 334–354; sequence TSASASKTEASSVSSSQVAPA.

The protein belongs to the G-protein coupled receptor 1 family. Opsin subfamily. Phosphorylated on some or all of the serine and threonine residues present in the C-terminal region. Post-translationally, contains one covalently linked retinal chromophore.

The protein resides in the membrane. It is found in the cell projection. It localises to the cilium. Its subcellular location is the photoreceptor outer segment. Functionally, photoreceptor required for image-forming vision at low light intensity. While most salt water fish species use retinal as chromophore, most freshwater fish use 3-dehydroretinal, or a mixture of retinal and 3-dehydroretinal. Light-induced isomerization of 11-cis to all-trans retinal triggers a conformational change that activates signaling via G-proteins. Subsequent receptor phosphorylation mediates displacement of the bound G-protein alpha subunit by arrestin and terminates signaling. The polypeptide is Rhodopsin (rho) (Leucoraja erinaceus (Little skate)).